The following is a 226-amino-acid chain: UPF0319 protein SO_1816 (226 aa).

The signal sequence occupies residues methionine 1–alanine 21.

The protein belongs to the UPF0319 family.

In Shewanella oneidensis (strain ATCC 700550 / JCM 31522 / CIP 106686 / LMG 19005 / NCIMB 14063 / MR-1), this protein is UPF0319 protein SO_1816.